Here is a 292-residue protein sequence, read N- to C-terminus: NAD kinase (292 aa).

Asp-73 serves as the catalytic Proton acceptor. NAD(+) contacts are provided by residues Asp-73–Gly-74, Asn-147–Glu-148, His-158, Arg-175, Asp-177, Thr-188–Ser-193, and Gln-247.

Belongs to the NAD kinase family. A divalent metal cation is required as a cofactor.

The protein localises to the cytoplasm. The catalysed reaction is NAD(+) + ATP = ADP + NADP(+) + H(+). Involved in the regulation of the intracellular balance of NAD and NADP, and is a key enzyme in the biosynthesis of NADP. Catalyzes specifically the phosphorylation on 2'-hydroxyl of the adenosine moiety of NAD to yield NADP. In Buchnera aphidicola subsp. Acyrthosiphon pisum (strain 5A), this protein is NAD kinase.